Here is a 59-residue protein sequence, read N- to C-terminus: Large ribosomal subunit protein uL30 (59 aa).

It belongs to the universal ribosomal protein uL30 family. In terms of assembly, part of the 50S ribosomal subunit.

The chain is Large ribosomal subunit protein uL30 from Photorhabdus laumondii subsp. laumondii (strain DSM 15139 / CIP 105565 / TT01) (Photorhabdus luminescens subsp. laumondii).